A 132-amino-acid polypeptide reads, in one-letter code: D-ribose pyranase (132 aa).

The Proton donor role is filled by H20. Substrate-binding positions include D28, H99, and 121-123; that span reads YSN.

Belongs to the RbsD / FucU family. RbsD subfamily. In terms of assembly, homodecamer.

The protein resides in the cytoplasm. It catalyses the reaction beta-D-ribopyranose = beta-D-ribofuranose. The protein operates within carbohydrate metabolism; D-ribose degradation; D-ribose 5-phosphate from beta-D-ribopyranose: step 1/2. Its function is as follows. Catalyzes the interconversion of beta-pyran and beta-furan forms of D-ribose. The chain is D-ribose pyranase from Pseudomonas putida (strain ATCC 47054 / DSM 6125 / CFBP 8728 / NCIMB 11950 / KT2440).